Reading from the N-terminus, the 208-residue chain is Holliday junction resolvase RecU (208 aa).

Residues 1-25 (MNYPNGKPFNRNKTKVGRTNDHKSS) form a disordered region. Mg(2+) contacts are provided by Thr-87, Asp-89, Glu-102, and Gln-121.

It belongs to the RecU family. Mg(2+) serves as cofactor.

It localises to the cytoplasm. The catalysed reaction is Endonucleolytic cleavage at a junction such as a reciprocal single-stranded crossover between two homologous DNA duplexes (Holliday junction).. Its function is as follows. Endonuclease that resolves Holliday junction intermediates in genetic recombination. Cleaves mobile four-strand junctions by introducing symmetrical nicks in paired strands. Promotes annealing of linear ssDNA with homologous dsDNA. Required for DNA repair, homologous recombination and chromosome segregation. In Staphylococcus carnosus (strain TM300), this protein is Holliday junction resolvase RecU.